Here is a 476-residue protein sequence, read N- to C-terminus: MLLSDLSSDQEATGSNSHGGGGGGDRMVVGSHGAAHVVLSNLFLPPAAAAAATMLLPAAPVMVRPAAMAAAQEPRAKKKRSLPGNPDPEAEVIALSPRALVATNRFVCEVCNKGFQRDQNLQLHRRGHNLPWKLRHRAAAVSAVTTAAPAPRKRVYVCPEPTCVHHDPARALGDLTGIKKHFSRKHGEKRWRCERCGKRYAVHSDWKAHVKNCGTREYRCDCGILFSRKDSLLTHRAFCDALAEESARLLAAANNSSSITTTTCNNSNISSNNNNNNINSISNSNNLLITSSSSSPPLFLPFSTTPAENPNPNQLLFLQQHQAAHHQLLLPQFQQPPSSPPAYFDHLAFGGGGGVITSSSCNDDNSSIAGDVMVAAGGDSVSFGLTSEGSVTMHAGDVGRRRLTRDFLGVDHDAGEVDELELDELPADLSTTAAACQGCNFAAATTVACCATDFTTGSRQYLGRLPPVNETWSHNF.

Positions methionine 1–threonine 13 are enriched in polar residues. The segment at methionine 1–methionine 27 is disordered. 2 C2H2-type zinc fingers span residues phenylalanine 106 to histidine 128 and tyrosine 156 to histidine 186. Short sequence motifs (nuclear localization signal) lie at residues histidine 124 to proline 131 and isoleucine 178 to lysine 185. The segment at tryptophan 191–glycine 214 adopts a C2H2-type 2; degenerate zinc-finger fold. The Zn(2+) site is built by cysteine 193, cysteine 196, histidine 209, cysteine 213, cysteine 220, cysteine 222, histidine 235, and cysteine 239. The segment at tyrosine 218–alanine 241 adopts a CCHC-type 2; atypical zinc-finger fold. Residues arginine 228–aspartate 240 form an SHR-binding region.

It localises to the nucleus. Its function is as follows. Transcription activator that acts as a flowering master switch in both long and short days, independently of the circadian clock. Promotes flowering upstream of HD1 by up-regulating FTL1, FTL4, FTL5, FTL6, EHD1, HD3A and RFT1. Seems to repress FTL11 expression. May recognize the consensus motif 5'-TTTGTCGTAAT-3' in target gene promoters. This is Protein EARLY HEADING DATE 2 from Oryza sativa subsp. indica (Rice).